The sequence spans 669 residues: DNA ligase (669 aa).

Residues 33–37 (DVTYD), 82–83 (SL), and Glu-115 contribute to the NAD(+) site. The N6-AMP-lysine intermediate role is filled by Lys-117. NAD(+)-binding residues include Arg-138, Glu-172, Lys-286, and Lys-310. Residues Cys-401, Cys-404, Cys-417, and Cys-422 each coordinate Zn(2+). One can recognise a BRCT domain in the interval 589-669 (VDSSFLFGKK…DIKNLVNLDD (81 aa)).

This sequence belongs to the NAD-dependent DNA ligase family. LigA subfamily. The cofactor is Mg(2+). Mn(2+) is required as a cofactor.

The enzyme catalyses NAD(+) + (deoxyribonucleotide)n-3'-hydroxyl + 5'-phospho-(deoxyribonucleotide)m = (deoxyribonucleotide)n+m + AMP + beta-nicotinamide D-nucleotide.. Its function is as follows. DNA ligase that catalyzes the formation of phosphodiester linkages between 5'-phosphoryl and 3'-hydroxyl groups in double-stranded DNA using NAD as a coenzyme and as the energy source for the reaction. It is essential for DNA replication and repair of damaged DNA. The protein is DNA ligase of Borrelia duttonii (strain Ly).